Reading from the N-terminus, the 204-residue chain is General stress protein Ctc (204 aa).

A disordered region spans residues 177–204 (ILPPQQQEAAEVDEEESADAQPEGENEQ). Over residues 186–204 (AEVDEEESADAQPEGENEQ) the composition is skewed to acidic residues.

Belongs to the bacterial ribosomal protein bL25 family. CTC subfamily. As to quaternary structure, part of the ribosome (presumably the 50S subunit) under heat-stress but not control growth conditions. Binds 5S rRNA.

Not required for exponential growth; probably functions in vegetatively growing cells, maybe required for accurate translation under stress conditions. The chain is General stress protein Ctc from Bacillus subtilis (strain 168).